A 449-amino-acid chain; its full sequence is L-seryl-tRNA(Sec) selenium transferase (449 aa).

Lys-286 carries the post-translational modification N6-(pyridoxal phosphate)lysine.

The protein belongs to the SelA family. Pyridoxal 5'-phosphate is required as a cofactor.

It localises to the cytoplasm. The enzyme catalyses L-seryl-tRNA(Sec) + selenophosphate + H(+) = L-selenocysteinyl-tRNA(Sec) + phosphate. The protein operates within aminoacyl-tRNA biosynthesis; selenocysteinyl-tRNA(Sec) biosynthesis; selenocysteinyl-tRNA(Sec) from L-seryl-tRNA(Sec) (bacterial route): step 1/1. Functionally, converts seryl-tRNA(Sec) to selenocysteinyl-tRNA(Sec) required for selenoprotein biosynthesis. In Sulfurimonas denitrificans (strain ATCC 33889 / DSM 1251) (Thiomicrospira denitrificans (strain ATCC 33889 / DSM 1251)), this protein is L-seryl-tRNA(Sec) selenium transferase.